A 700-amino-acid chain; its full sequence is Putative cysteine-rich receptor-like protein kinase 30 (700 aa).

The N-terminal stretch at methionine 1–alanine 24 is a signal peptide. 2 Gnk2-homologous domains span residues glutamine 25 to serine 129 and leucine 135 to phenylalanine 250. Residues glutamine 25–threonine 285 lie on the Extracellular side of the membrane. Residues asparagine 63, asparagine 105, asparagine 146, asparagine 150, and asparagine 191 are each glycosylated (N-linked (GlcNAc...) asparagine). A helical membrane pass occupies residues isoleucine 286–valine 306. The Cytoplasmic segment spans residues serine 307 to aspartate 700. The Protein kinase domain maps to phenylalanine 346–isoleucine 626. ATP contacts are provided by residues isoleucine 352–valine 360 and lysine 374. The Proton acceptor role is filled by aspartate 474. Serine 478 carries the phosphoserine modification. Phosphothreonine is present on threonine 514. The residue at position 522 (tyrosine 522) is a Phosphotyrosine.

This sequence belongs to the protein kinase superfamily. Ser/Thr protein kinase family. CRK subfamily.

It is found in the membrane. It carries out the reaction L-seryl-[protein] + ATP = O-phospho-L-seryl-[protein] + ADP + H(+). The catalysed reaction is L-threonyl-[protein] + ATP = O-phospho-L-threonyl-[protein] + ADP + H(+). In Arabidopsis thaliana (Mouse-ear cress), this protein is Putative cysteine-rich receptor-like protein kinase 30 (CRK30).